Consider the following 336-residue polypeptide: Phospho-N-acetylmuramoyl-pentapeptide-transferase (336 aa).

10 helical membrane passes run 3–23 (LTLIAAIISFMVSAFTMPYFI), 53–73 (GGTVFLLVATAVSLLVSLFSI), 78–98 (SLALISGILSIVVIYGIIGFL), 118–138 (LALQLAGGLMFYFLHVSPSGI), 143–163 (VFGYQLPLGIFYLFFVLFWVV), 174–194 (GIDGLASISVVISLVTYGVIA), 200–220 (FDVLLLIGAMIGALLGFFCFN), 226–246 (VFMGDVGSLALGAMLAAISIA), 251–271 (WTLLIIGIVYVLETSSVMLQV), and 316–336 (AFLWGVGSLASLLVLAILYVF).

Belongs to the glycosyltransferase 4 family. MraY subfamily. It depends on Mg(2+) as a cofactor.

The protein resides in the cell membrane. The catalysed reaction is UDP-N-acetyl-alpha-D-muramoyl-L-alanyl-gamma-D-glutamyl-L-lysyl-D-alanyl-D-alanine + di-trans,octa-cis-undecaprenyl phosphate = Mur2Ac(oyl-L-Ala-gamma-D-Glu-L-Lys-D-Ala-D-Ala)-di-trans,octa-cis-undecaprenyl diphosphate + UMP. Its pathway is cell wall biogenesis; peptidoglycan biosynthesis. Catalyzes the initial step of the lipid cycle reactions in the biosynthesis of the cell wall peptidoglycan: transfers peptidoglycan precursor phospho-MurNAc-pentapeptide from UDP-MurNAc-pentapeptide onto the lipid carrier undecaprenyl phosphate, yielding undecaprenyl-pyrophosphoryl-MurNAc-pentapeptide, known as lipid I. The protein is Phospho-N-acetylmuramoyl-pentapeptide-transferase of Streptococcus pyogenes serotype M49 (strain NZ131).